A 257-amino-acid chain; its full sequence is Hydroxyethylthiazole kinase 1 (257 aa).

Methionine 41 provides a ligand contact to substrate. The ATP site is built by lysine 117 and threonine 162. Glycine 189 contributes to the substrate binding site.

Belongs to the Thz kinase family. Mg(2+) serves as cofactor.

The enzyme catalyses 5-(2-hydroxyethyl)-4-methylthiazole + ATP = 4-methyl-5-(2-phosphooxyethyl)-thiazole + ADP + H(+). The protein operates within cofactor biosynthesis; thiamine diphosphate biosynthesis; 4-methyl-5-(2-phosphoethyl)-thiazole from 5-(2-hydroxyethyl)-4-methylthiazole: step 1/1. Its function is as follows. Catalyzes the phosphorylation of the hydroxyl group of 4-methyl-5-beta-hydroxyethylthiazole (THZ). The protein is Hydroxyethylthiazole kinase 1 of Oceanobacillus iheyensis (strain DSM 14371 / CIP 107618 / JCM 11309 / KCTC 3954 / HTE831).